Reading from the N-terminus, the 730-residue chain is Hepatocyte growth factor (730 aa).

The N-terminal stretch at 1 to 31 (MWVTRLLPVLLLQHVLLHLLLLPIAIPYAEG) is a signal peptide. Gln-32 is modified (pyrrolidone carboxylic acid). The region spanning 37 to 123 (NTLHEFKRSA…HEFDLYENKD (87 aa)) is the PAN domain. 8 disulfides stabilise this stretch: Cys-70–Cys-96, Cys-74–Cys-84, Cys-128–Cys-206, Cys-149–Cys-189, Cys-177–Cys-201, Cys-211–Cys-288, Cys-232–Cys-271, and Cys-260–Cys-283. 2 consecutive Kringle domains span residues 128 to 206 (CIIG…IPQC) and 211 to 288 (CMTC…IKMC). A glycan (N-linked (GlcNAc...) asparagine) is linked at Asn-294. Cystine bridges form between Cys-305–Cys-383, Cys-326–Cys-365, Cys-354–Cys-377, Cys-391–Cys-469, Cys-412–Cys-452, Cys-440–Cys-464, Cys-487–Cys-606, Cys-519–Cys-535, Cys-614–Cys-681, Cys-644–Cys-660, and Cys-671–Cys-699. 2 Kringle domains span residues 305-383 (CIQG…IPKC) and 391-469 (CYRG…ISRC). The Peptidase S1 domain maps to 495 to 723 (VVNGIPTRTN…YAKWIHKIIL (229 aa)). N-linked (GlcNAc...) asparagine glycosylation is found at Asn-568 and Asn-655.

It belongs to the peptidase S1 family. Plasminogen subfamily. As to quaternary structure, dimer of an alpha chain and a beta chain linked by a disulfide bond. Interacts with SRPX2; the interaction increases HGF mitogenic activity. In terms of processing, the single-chain precursor undergoes proteolytic processing by TMPRSS13 resulting in an active two-chain form. The single-chain precursor undergoes proteolytic processing by HGFAC resulting in an active two-chain form.

In terms of biological role, potent mitogen for mature parenchymal hepatocyte cells, seems to be a hepatotrophic factor, and acts as a growth factor for a broad spectrum of tissues and cell types. Activating ligand for the receptor tyrosine kinase MET by binding to it and promoting its dimerization. Activates MAPK signaling following TMPRSS13 cleavage and activation. The sequence is that of Hepatocyte growth factor (HGF) from Bos taurus (Bovine).